A 132-amino-acid polypeptide reads, in one-letter code: Translation initiation factor 2 subunit beta (132 aa).

The tract at residues 1 to 30 is disordered; that stretch reads MDYEEQLDRAMDEKPDVTGSETRFEVPDPN.

Belongs to the eIF-2-beta/eIF-5 family. Heterotrimer composed of an alpha, a beta and a gamma chain.

Functionally, eIF-2 functions in the early steps of protein synthesis by forming a ternary complex with GTP and initiator tRNA. The chain is Translation initiation factor 2 subunit beta from Halobacterium salinarum (strain ATCC 29341 / DSM 671 / R1).